The following is a 55-amino-acid chain: Histone H1 (55 aa).

Positions 1–15 are enriched in low complexity; that stretch reads MAEVAPAPAAAAPAK. The interval 1–28 is disordered; the sequence is MAEVAPAPAAAAPAKAPKKKAAAKPKKA. Residue A2 is modified to N-acetylalanine. Residues 16 to 27 are compositionally biased toward basic residues; sequence APKKKAAAKPKK. The H15 domain occupies 28–55; that stretch reads AGPSVGELIVKAVSASKERSGVSLAALK.

The protein belongs to the histone H1/H5 family.

The protein localises to the nucleus. The protein resides in the chromosome. It is found in the secreted. Functionally, histones H1 are necessary for the condensation of nucleosome chains into higher-order structures. Its function is as follows. SAMP H1 has antibacterial activity against Gram-negative bacteria E.coli, A.salmonicida subsp salmonicida, V.anguillarum and S.typhimurium and Gram-positive bacteria B.subtilis and L.ivanovii. The polypeptide is Histone H1 (Salmo salar (Atlantic salmon)).